The primary structure comprises 77 residues: Conotoxin Ar5.1 a (77 aa).

The first 19 residues, 1-19 (MLCLPVFIILLLLASPAAS), serve as a signal peptide directing secretion. A propeptide spanning residues 20–44 (NPLETRIQSDLIRAALEDADMKNEK) is cleaved from the precursor.

This sequence belongs to the conotoxin T superfamily. In terms of processing, contains 2 disulfide bonds that can be either 'C1-C3, C2-C4' or 'C1-C4, C2-C3', since these disulfide connectivities have been observed for conotoxins with cysteine framework V (for examples, see AC P0DQQ7 and AC P81755). As to expression, expressed by the venom duct.

The protein localises to the secreted. This is Conotoxin Ar5.1 a from Conus arenatus (Sand-dusted cone).